We begin with the raw amino-acid sequence, 591 residues long: L-fucose isomerase (591 aa).

Catalysis depends on proton acceptor residues Glu-337 and Asp-361. Mn(2+) contacts are provided by Glu-337, Asp-361, and His-528.

This sequence belongs to the L-fucose isomerase family. In terms of assembly, homohexamer. Mn(2+) serves as cofactor.

The protein resides in the cytoplasm. The enzyme catalyses L-fucose = L-fuculose. It participates in carbohydrate degradation; L-fucose degradation; L-lactaldehyde and glycerone phosphate from L-fucose: step 1/3. In terms of biological role, converts the aldose L-fucose into the corresponding ketose L-fuculose. This is L-fucose isomerase from Escherichia coli (strain SE11).